Here is a 320-residue protein sequence, read N- to C-terminus: Acetyl-coenzyme A carboxylase carboxyl transferase subunit alpha (320 aa).

The region spanning 42–295 is the CoA carboxyltransferase C-terminal domain; that stretch reads IEEKAVQALN…GDAIAAAFAE (254 aa).

This sequence belongs to the AccA family. As to quaternary structure, acetyl-CoA carboxylase is a heterohexamer composed of biotin carboxyl carrier protein (AccB), biotin carboxylase (AccC) and two subunits each of ACCase subunit alpha (AccA) and ACCase subunit beta (AccD).

The protein resides in the cytoplasm. It catalyses the reaction N(6)-carboxybiotinyl-L-lysyl-[protein] + acetyl-CoA = N(6)-biotinyl-L-lysyl-[protein] + malonyl-CoA. Its pathway is lipid metabolism; malonyl-CoA biosynthesis; malonyl-CoA from acetyl-CoA: step 1/1. Functionally, component of the acetyl coenzyme A carboxylase (ACC) complex. First, biotin carboxylase catalyzes the carboxylation of biotin on its carrier protein (BCCP) and then the CO(2) group is transferred by the carboxyltransferase to acetyl-CoA to form malonyl-CoA. The protein is Acetyl-coenzyme A carboxylase carboxyl transferase subunit alpha of Rhodopseudomonas palustris (strain HaA2).